Here is a 512-residue protein sequence, read N- to C-terminus: tRNA modification GTPase gtpbp3, mitochondrial (512 aa).

The 189-residue stretch at 246-434 (GANIAIVGPP…LLNLLKLNLK (189 aa)) folds into the TrmE-type G domain. Residues 253-260 (GPPNAGKS), 300-304 (DTAGL), and 375-378 (NKSD) each bind GTP.

Belongs to the TRAFAC class TrmE-Era-EngA-EngB-Septin-like GTPase superfamily. TrmE GTPase family.

It localises to the mitochondrion. GTPase involved in the 5-carboxymethylaminomethyl modification (mnm(5)s(2)U34) of the wobble uridine base in mitochondrial tRNAs. The chain is tRNA modification GTPase gtpbp3, mitochondrial (gtpbp3) from Dictyostelium discoideum (Social amoeba).